We begin with the raw amino-acid sequence, 57 residues long: UPF0391 membrane protein RPD_3366 (57 aa).

A run of 2 helical transmembrane segments spans residues 4 to 24 and 30 to 50; these read WVVTFLVVALIAGILGFGGIA and IAKVIFFIAVVLFLISAVVGL.

Belongs to the UPF0391 family.

Its subcellular location is the cell membrane. This Rhodopseudomonas palustris (strain BisB5) protein is UPF0391 membrane protein RPD_3366.